The chain runs to 56 residues: Small ribosomal subunit protein uS14 (56 aa).

Residues Cys-21, Cys-24, Cys-39, and Cys-42 each contribute to the Zn(2+) site.

It belongs to the universal ribosomal protein uS14 family. Component of the 40S small ribosomal subunit. It depends on Zn(2+) as a cofactor.

Its subcellular location is the cytoplasm. It is found in the cytosol. The protein resides in the rough endoplasmic reticulum. The sequence is that of Small ribosomal subunit protein uS14 (RpS29) from Drosophila melanogaster (Fruit fly).